The chain runs to 413 residues: Calsequestrin-2 (413 aa).

An N-terminal signal peptide occupies residues 1–19 (MKRIYLLVVGLYLLSFSRA). Tyr-282 carries the post-translational modification Phosphotyrosine. Asn-335 carries an N-linked (GlcNAc...) asparagine glycan. The tract at residues 365-413 (VLSGKINTEDDDNEDEDDDGDNDNDDDDDDDDNSDEDNDDSDDDDDDDE) is disordered. The segment covering 373 to 413 (EDDDNEDEDDDGDNDNDDDDDDDDNSDEDNDDSDDDDDDDE) has biased composition (acidic residues). Residues Ser-398 and Ser-405 each carry the phosphoserine modification.

This sequence belongs to the calsequestrin family. As to quaternary structure, monomer, homodimer and homooligomer. Mostly monomeric in the absence of calcium. Forms higher oligomers in a calcium-dependent manner. Dimers associate to form tetramers, that then form linear homomer chains. Interacts with ASPH and TRDN. In terms of processing, phosphorylation in the C-terminus, probably by CK2, moderately increases calcium buffering capacity. Post-translationally, N-glycosylated. As to expression, detected in stomach and vas deferens (at protein level).

The protein localises to the sarcoplasmic reticulum lumen. Its function is as follows. Calsequestrin is a high-capacity, moderate affinity, calcium-binding protein and thus acts as an internal calcium store in muscle. Calcium ions are bound by clusters of acidic residues at the protein surface, especially at the interface between subunits. Can bind around 60 Ca(2+) ions. Regulates the release of lumenal Ca(2+) via the calcium release channel RYR2; this plays an important role in triggering muscle contraction. Plays a role in excitation-contraction coupling in the heart and in regulating the rate of heart beats. This chain is Calsequestrin-2 (Casq2), found in Rattus norvegicus (Rat).